The chain runs to 62 residues: Sperm protamine P1 (62 aa).

The segment at 1 to 46 (MARCRRHSRSRSRSRNQCQRRRRRHYNRRRTYRRSRRHSRRRRVRR) is disordered.

This sequence belongs to the protamine P1 family. In terms of tissue distribution, testis.

Its subcellular location is the nucleus. It localises to the chromosome. In terms of biological role, protamines substitute for histones in the chromatin of sperm during the haploid phase of spermatogenesis. They compact sperm DNA into a highly condensed, stable and inactive complex. This is Sperm protamine P1 (PRM1) from Planigale gilesi (Flat-skulled marsupial mouse).